The following is a 952-amino-acid chain: Probable RNA-binding protein 19 (952 aa).

In terms of domain architecture, RRM 1 spans 2–79 (SRLIVKNLPN…TRITVEFCKS (78 aa)). Disordered stretches follow at residues 85–126 (KPRA…LEKL), 159–267 (KAKT…RGAV), and 367–395 (KQAP…EEED). Low complexity predominate over residues 95 to 109 (KSSQPKQPSQDSVPS). A compositionally biased stretch (polar residues) spans 163-180 (KASSDYLNFDSDSNSDSG). S177, S179, and S183 each carry phosphoserine. 2 stretches are compositionally biased toward acidic residues: residues 181–196 (QESE…EEEQ) and 224–251 (SSED…EEEG). RRM domains are found at residues 293 to 368 (YTVK…REKQ) and 400 to 478 (GRLF…PSTI). K479 participates in a covalent cross-link: Glycyl lysine isopeptide (Lys-Gly) (interchain with G-Cter in SUMO2). The disordered stretch occupies residues 481–504 (EASQEANAPGSSYKKKKEAMDKAN). One can recognise an RRM 4 domain in the interval 584 to 656 (TVILAKNLPA…VPLYLEWAPI (73 aa)). The span at 664–679 (QKKDSQHEQPAEKAEV) shows a compositional bias: basic and acidic residues. The segment at 664-719 (QKKDSQHEQPAEKAEVEQETVLDPEGEKASVEGAEASTGKMEEEEEEEEEEEEESI) is disordered. Phosphoserine is present on S693. Residues 705-718 (EEEEEEEEEEEEES) show a composition bias toward acidic residues. RRM domains follow at residues 722-803 (CTLF…ISER) and 824-904 (SKIL…WADS). S928 and S944 each carry phosphoserine.

The protein belongs to the RRM MRD1 family. As to expression, expressed in the crypts of Lieberkuhn of the intestine (at protein level).

The protein resides in the nucleus. It is found in the nucleolus. Its subcellular location is the nucleoplasm. It localises to the cytoplasm. The protein localises to the chromosome. Its function is as follows. Plays a role in embryo pre-implantation development. The polypeptide is Probable RNA-binding protein 19 (Rbm19) (Mus musculus (Mouse)).